The primary structure comprises 123 residues: Galanin peptides (123 aa).

The signal sequence occupies residues 1–19; sequence MPRGCALLLASLLLASALS. A propeptide spanning residues 20–30 is cleaved from the precursor; it reads ATLGLGSPVKE. At Ala-61 the chain carries Alanine amide. Phosphoserine is present on residues Ser-116 and Ser-117.

Belongs to the galanin family.

The protein resides in the secreted. Its function is as follows. Endocrine hormone of the central and peripheral nervous systems that binds and activates the G protein-coupled receptors GALR1, GALR2, and GALR3. This small neuropeptide may regulate diverse physiologic functions including contraction of smooth muscle of the gastrointestinal and genitourinary tract, growth hormone and insulin release and adrenal secretion. In Sus scrofa (Pig), this protein is Galanin peptides (GAL).